We begin with the raw amino-acid sequence, 164 residues long: SsrA-binding protein (164 aa).

The interval 141 to 164 (KLHDKRQDEKQKSIKKEINSALKR) is disordered. Residues 145–158 (KRQDEKQKSIKKEI) are compositionally biased toward basic and acidic residues.

This sequence belongs to the SmpB family.

The protein localises to the cytoplasm. Its function is as follows. Required for rescue of stalled ribosomes mediated by trans-translation. Binds to transfer-messenger RNA (tmRNA), required for stable association of tmRNA with ribosomes. tmRNA and SmpB together mimic tRNA shape, replacing the anticodon stem-loop with SmpB. tmRNA is encoded by the ssrA gene; the 2 termini fold to resemble tRNA(Ala) and it encodes a 'tag peptide', a short internal open reading frame. During trans-translation Ala-aminoacylated tmRNA acts like a tRNA, entering the A-site of stalled ribosomes, displacing the stalled mRNA. The ribosome then switches to translate the ORF on the tmRNA; the nascent peptide is terminated with the 'tag peptide' encoded by the tmRNA and targeted for degradation. The ribosome is freed to recommence translation, which seems to be the essential function of trans-translation. The chain is SsrA-binding protein from Prochlorococcus marinus (strain MIT 9301).